The following is a 797-amino-acid chain: Interphotoreceptor matrix proteoglycan 1 (797 aa).

The N-terminal stretch at 1 to 20 (MYLETRRAIFVFWIFLQVQG) is a signal peptide. Asparagine 42, asparagine 143, asparagine 191, and asparagine 215 each carry an N-linked (GlcNAc...) asparagine glycan. The SEA 1 domain occupies 232 to 354 (EEQRVELSVS…QPEIYLTATD (123 aa)). 4 O-linked (GalNAc...) threonine glycosylation sites follow: threonine 403, threonine 421, threonine 432, and threonine 442. Positions 571 to 684 (RELVVFFSLR…YSLNIEPADQ (114 aa)) constitute an SEA 2 domain. N-linked (GlcNAc...) asparagine glycosylation is found at asparagine 592 and asparagine 616. Positions 621-629 (KQLEILNFR) match the Heparin- and hyaluronan-binding motif. N-linked (GlcNAc...) asparagine glycans are attached at residues asparagine 630 and asparagine 648.

Post-translationally, the N-terminus is blocked. In terms of processing, highly glycosylated (N- and O-linked carbohydrates and sialic acid). As to expression, expressed in the retina (at protein level). In the retina, specifically expressed by cone and rod photoreceptor cells. Localizes to cone and rod photoreceptor cells surrounding the interphotoreceptor matrix of the retina.

It is found in the cell projection. It localises to the cilium. The protein resides in the photoreceptor outer segment. The protein localises to the secreted. Its subcellular location is the extracellular space. It is found in the extracellular matrix. It localises to the interphotoreceptor matrix. The protein resides in the photoreceptor inner segment. Its function is as follows. Chondroitin sulfate-, heparin- and hyaluronan-binding protein. May serve to form a basic macromolecular scaffold comprising the insoluble interphotoreceptor matrix. In Homo sapiens (Human), this protein is Interphotoreceptor matrix proteoglycan 1.